We begin with the raw amino-acid sequence, 384 residues long: Succinyl-diaminopimelate desuccinylase (384 aa).

A Zn(2+)-binding site is contributed by histidine 71. Aspartate 73 is a catalytic residue. Aspartate 104 is a binding site for Zn(2+). The Proton acceptor role is filled by glutamate 139. The Zn(2+) site is built by glutamate 140, glutamate 168, and histidine 357.

This sequence belongs to the peptidase M20A family. DapE subfamily. As to quaternary structure, homodimer. The cofactor is Zn(2+). Co(2+) serves as cofactor.

The enzyme catalyses N-succinyl-(2S,6S)-2,6-diaminopimelate + H2O = (2S,6S)-2,6-diaminopimelate + succinate. It participates in amino-acid biosynthesis; L-lysine biosynthesis via DAP pathway; LL-2,6-diaminopimelate from (S)-tetrahydrodipicolinate (succinylase route): step 3/3. Catalyzes the hydrolysis of N-succinyl-L,L-diaminopimelic acid (SDAP), forming succinate and LL-2,6-diaminopimelate (DAP), an intermediate involved in the bacterial biosynthesis of lysine and meso-diaminopimelic acid, an essential component of bacterial cell walls. In Afipia carboxidovorans (strain ATCC 49405 / DSM 1227 / KCTC 32145 / OM5) (Oligotropha carboxidovorans), this protein is Succinyl-diaminopimelate desuccinylase.